The primary structure comprises 374 residues: MAPHQKSRINRINSTRSVPLRLATGGVLATLLIGGVTAAATKKDIIVDVNGEQMSLVTMSGTVEGVLAQAGVELGDQDIVSPSLDSSISDEDTVTVRTAKQVALVVEGQIQNVTTTAVSVEDLLQEVGGITGADAVDADLSETIPESGLKVSVTKPKIISINDGGKVTYVSLAAQNVQEALELRDIELGAQDRINVPLDQQLKNNAAIQIDRVDNTEITETVSFDAEPTYVDDPEAPAGDETVVEEGAPGTKEVTRTVTTVNGQEESSTVINEVEITAAKPATISRGTKTVAANSVWDQLAQCESGGNWAINTGNGFSGGLQFHPQTWLAYGGGAFSGDASGASREQQISIAEKVQAAQGWGAWPACTASLGIR.

Positions 1–40 (MAPHQKSRINRINSTRSVPLRLATGGVLATLLIGGVTAAA) are cleaved as a signal peptide. The G5 domain maps to 210–290 (IDRVDNTEIT…PATISRGTKT (81 aa)). The interval 228-252 (PTYVDDPEAPAGDETVVEEGAPGTK) is disordered.

Belongs to the transglycosylase family. Rpf subfamily. Glycosylated; by Pmt, by at least mannose and galactose. Other unidentified sugars may also be present. In terms of processing, may be subject to proteolytic cleavage as multiple shorter forms are detected in gels. Post-translationally, at least 3 non-glycosylated protein isoforms of 35, 40 and 42 kDa are seen in gels.

It is found in the secreted. Its subcellular location is the cell surface. Its function is as follows. Factor that stimulates resuscitation of dormant cells. Has peptidoglycan (PG) hydrolytic activity. Active in the pM concentration range. Has little to no effect on actively-growing cells. PG fragments could either directly activate the resuscitation pathway of dormant bacteria or serve as a substrate for endogenous Rpf, resulting in low molecular weight products with resuscitation activity. The protein is Resuscitation-promoting factor Rpf2 (rpf2) of Corynebacterium glutamicum (strain ATCC 13032 / DSM 20300 / JCM 1318 / BCRC 11384 / CCUG 27702 / LMG 3730 / NBRC 12168 / NCIMB 10025 / NRRL B-2784 / 534).